Reading from the N-terminus, the 477-residue chain is Aspartyl/glutamyl-tRNA(Asn/Gln) amidotransferase subunit B (477 aa).

This sequence belongs to the GatB/GatE family. GatB subfamily. Heterotrimer of A, B and C subunits.

It catalyses the reaction L-glutamyl-tRNA(Gln) + L-glutamine + ATP + H2O = L-glutaminyl-tRNA(Gln) + L-glutamate + ADP + phosphate + H(+). The catalysed reaction is L-aspartyl-tRNA(Asn) + L-glutamine + ATP + H2O = L-asparaginyl-tRNA(Asn) + L-glutamate + ADP + phosphate + 2 H(+). In terms of biological role, allows the formation of correctly charged Asn-tRNA(Asn) or Gln-tRNA(Gln) through the transamidation of misacylated Asp-tRNA(Asn) or Glu-tRNA(Gln) in organisms which lack either or both of asparaginyl-tRNA or glutaminyl-tRNA synthetases. The reaction takes place in the presence of glutamine and ATP through an activated phospho-Asp-tRNA(Asn) or phospho-Glu-tRNA(Gln). The chain is Aspartyl/glutamyl-tRNA(Asn/Gln) amidotransferase subunit B from Legionella pneumophila (strain Lens).